Reading from the N-terminus, the 184-residue chain is MKNVTDSFVFLGHWPSAGSFGFNTDILATNLINLSVVLGVLIFFGKGVLSDLLDNRKQRILNTIRNSEELRGKAIEQLEKARARLKKVEMDADQFRVNGYSEIEREKMNLINSTYKTLEQFENYKNETIQFEQQKAINQVRQRVFQQALQGALGTLNSCLNNELHLRTINANIGMFGAMNEITD.

Residues 27–49 traverse the membrane as a helical segment; that stretch reads LATNLINLSVVLGVLIFFGKGVL.

It belongs to the ATPase B chain family. In terms of assembly, F-type ATPases have 2 components, F(1) - the catalytic core - and F(0) - the membrane proton channel. F(1) has five subunits: alpha(3), beta(3), gamma(1), delta(1), epsilon(1). F(0) has four main subunits: a(1), b(1), b'(1) and c(10-14). The alpha and beta chains form an alternating ring which encloses part of the gamma chain. F(1) is attached to F(0) by a central stalk formed by the gamma and epsilon chains, while a peripheral stalk is formed by the delta, b and b' chains.

It is found in the plastid. The protein localises to the chloroplast thylakoid membrane. In terms of biological role, f(1)F(0) ATP synthase produces ATP from ADP in the presence of a proton or sodium gradient. F-type ATPases consist of two structural domains, F(1) containing the extramembraneous catalytic core and F(0) containing the membrane proton channel, linked together by a central stalk and a peripheral stalk. During catalysis, ATP synthesis in the catalytic domain of F(1) is coupled via a rotary mechanism of the central stalk subunits to proton translocation. Its function is as follows. Component of the F(0) channel, it forms part of the peripheral stalk, linking F(1) to F(0). In Spinacia oleracea (Spinach), this protein is ATP synthase subunit b, chloroplastic.